Here is a 213-residue protein sequence, read N- to C-terminus: MPIMLNFSNGRILPESEVEALRNVARSNQSDVLLVGSRSLRLHHISFMDGFSVEPIPGSFLDRIGERRHRRLAESLERQLNGGSSFLQAFSQYIEQTSSAPPLQESVRNEVQSRVNSYAFSVNPGDFPCSVLHLSCPITLCVPETGVFVKNARCSKVCSLYDISALTEMLRRNASHPLSREAFTPGMIVHKEECNFNTTEQHFCILPRSDTRL.

The interval 136 to 189 (CPITLCVPETGVFVKNARCSKVCSLYDISALTEMLRRNASHPLSREAFTPGMIV) is RING/U-box domain. Positions 211-213 (TRL) match the PDZ-binding motif motif.

It belongs to the NleG E3 ligase family. In terms of assembly, interacts with host GOPC (human protein).

The protein resides in the secreted. It localises to the host cytoplasm. It catalyses the reaction S-ubiquitinyl-[E2 ubiquitin-conjugating enzyme]-L-cysteine + [acceptor protein]-L-lysine = [E2 ubiquitin-conjugating enzyme]-L-cysteine + N(6)-ubiquitinyl-[acceptor protein]-L-lysine.. Effector proteins function to alter host cell physiology and promote bacterial survival in host tissues. This protein is an E3 ubiquitin-protein ligase that probably interferes with the host's ubiquitination pathway and targets host proteins for proteasomal degradation. Mice infected with a strain of bacteria deleted for this gene had an increased survival rate. Can be ubiquitinylated, and ubiquitinate ubiquitin, giving rise to polyubiquitin chains (in vitro). The protein is E3 ubiquitin-protein ligase NleG8 of Citrobacter rodentium.